A 246-amino-acid polypeptide reads, in one-letter code: uncharacterized protein (246 aa).

The N-terminal stretch at 1 to 24 is a signal peptide; it reads MGAPLRHCLLVAAALSLGCGVAAA. The next 2 membrane-spanning stretches (helical) occupy residues 71–91 and 104–124; these read YYLG…IGLV and FTCA…AGGA.

Its subcellular location is the cell membrane. This is an uncharacterized protein from Mycobacterium tuberculosis (strain ATCC 25618 / H37Rv).